The chain runs to 954 residues: MSMPKDFTFTDYKPYDFANRRHIGPSPAEMDEMLKVVGYPSLDALIDDTVPPSIRQQTPLAWGAPMTEREALDKLRETANRNRKVVSLIGQGYYGTITPPVIQRNILENPAWYTAYTPYQPEISQGRLEALLNFQTMVCDLTGLDVANASLLDEATAAAEAMAIAERVAKSKAKAFFVDENCHPQTIALLKTRAEPLGWQIVVGNPFEDLDAAIVFGAIFQYPGTYGHVRDFSGLIARLHELGAIAAVAADPLALALLKSPGEMGADIAVGSTQRFGVPVGYGGPHAAYMAVRDAYKRSMPGRLVGVSVDARGNRAYRLSLQTREQHIRREKATSNICTAQVLLAVMASMYAVFHGPEGIKAIAQSVHQKTVRLALGLEKLGYTVEPDVFFDTITVEVGKLQGIILKAAVAEDVNLRKIGTTKIGISLDERSRPITLEAVWRAFGGDFSVDQFEPDYRLPKELLRTSDYLTHPIFHMNRAESEMTRYMRRLADRDLALDRAMIPLGSCTMKLNATAEMLPITWPEFSEIHPFVPADQAMGYHHLIEDLSQKLCAITGYDAISMQPNSGAQGEYAGLLAIRAYHIANGNEHRDVCLIPTSAHGTNPASAQMAGMKVVVVKVSDAGEIAMDDFRAKAEQYAETLSCCMITYPSTHGVFEENVREVCEIVHKHGGQVYLDGANMNAMVGLSRPGDIGSDVSHLNLHKTFCIPHGGGGPGMGPIGVKAHLAPFLPGHPESGEHKGAVSAAPFGSASILPISWSYCLMMGGEGLTQATKVAILNANYVAARLKGAFDVLYKSAKGRVAHECIIDTRPLAESAGVTVDDVAKRLIDCGFHAPTMSWPVAGTLMIEPTESETKAELDRFCDALLAIREEARAIAEGRMDKINNPLKNAPHTVEDLVGDWDRPYSREQACFPPGAFRVDKYWSPVNRVDNVYGDRNLVCTCPPIESYAEAAE.

At Lys-704 the chain carries N6-(pyridoxal phosphate)lysine.

It belongs to the GcvP family. In terms of assembly, the glycine cleavage system is composed of four proteins: P, T, L and H. Requires pyridoxal 5'-phosphate as cofactor.

It carries out the reaction N(6)-[(R)-lipoyl]-L-lysyl-[glycine-cleavage complex H protein] + glycine + H(+) = N(6)-[(R)-S(8)-aminomethyldihydrolipoyl]-L-lysyl-[glycine-cleavage complex H protein] + CO2. In terms of biological role, the glycine cleavage system catalyzes the degradation of glycine. The P protein binds the alpha-amino group of glycine through its pyridoxal phosphate cofactor; CO(2) is released and the remaining methylamine moiety is then transferred to the lipoamide cofactor of the H protein. In Sinorhizobium medicae (strain WSM419) (Ensifer medicae), this protein is Glycine dehydrogenase (decarboxylating).